The chain runs to 1059 residues: Mitogen-activated protein kinase kinase kinase mlk-1 (1059 aa).

The disordered stretch occupies residues 1-66 (MEQASVPSYV…ESSQVSRESP (66 aa)). A compositionally biased stretch (low complexity) spans 38 to 48 (DTTTASTSTDS). An SH3 domain is found at 69–130 (RASKAFVASY…PSNYAREVTY (62 aa)). The Protein kinase domain occupies 150–454 (TLSDCQIGHG…TLAISFKQYA (305 aa)). ATP-binding positions include 156 to 164 (IGHGATATV) and lysine 193. The stretch at 199–224 (ASNFRADVVSTDEQLEQLKREANLVN) forms a coiled coil. The Proton acceptor role is filled by aspartate 297. Residue serine 355 is modified to Phosphoserine; by max-2 and tpa-1. Disordered stretches follow at residues 617–699 (PVVS…QTTR) and 714–808 (RAQS…SSSD). Polar residues predominate over residues 623 to 633 (MDDSNTFSTID). Basic and acidic residues-rich tracts occupy residues 639–648 (DPNHSKESKK) and 662–674 (NKRDSKEDHDERA). Low complexity predominate over residues 678–689 (SISSRSSSTTSS). Residues 690–699 (NRLITGQTTR) are compositionally biased toward polar residues. The span at 749-759 (RYVKDLEKDTP) shows a compositional bias: basic and acidic residues. Composition is skewed to polar residues over residues 774–790 (LDQTIPASPNSPDSINN) and 798–808 (SRRTTANSSSD). The short motif at 937 to 940 (NPQY) is the NPQY motif element. A Phosphotyrosine modification is found at tyrosine 940.

It belongs to the protein kinase superfamily. STE Ser/Thr protein kinase family. MAP kinase kinase kinase subfamily. In terms of assembly, interacts with max-2; the interaction is independent of max-2 and mlk-1 kinase activities. May interact (via NPQY motif when phosphorylated on tyrosine residue) with shc-1 (via PID domain); the interaction may facilitate mek-1 phosphorylation by bringing mlk-1 and mek-1 together. Interacts with svh-2 (via cytoplasmic domain). Interacts with tpa-1. Requires Mg(2+) as cofactor. Post-translationally, may be phosphorylated on tyrosine residues by svh-2. May be ubiquitinated and targeted for proteasomal degradation by E3 ubiquitin ligase rpm-1. In terms of tissue distribution, expressed in pharynx, intestine, hypodermis, neurons and body muscles.

It catalyses the reaction L-seryl-[protein] + ATP = O-phospho-L-seryl-[protein] + ADP + H(+). The catalysed reaction is L-threonyl-[protein] + ATP = O-phospho-L-threonyl-[protein] + ADP + H(+). Activated by phosphorylation at Ser-355. May be activated by svh-2-mediated phosphorylation. In terms of biological role, serine/threonine-protein kinase which, by phosphorylating and activating mek-1, plays an important role in the activation of the JNK pathway composed of mlk-1, mek-1 and kgb-1. Involved in the response to environmental stress such as heavy metals. By activating the JNK pathway downstream of tyrosine receptor svh-2, plays a role in axon regeneration after injury. This chain is Mitogen-activated protein kinase kinase kinase mlk-1, found in Caenorhabditis elegans.